We begin with the raw amino-acid sequence, 569 residues long: ABC1 family protein MCP2 (569 aa).

The transit peptide at 1–18 (MMTKAFFNKLPFEVFRRY) directs the protein to the mitochondrion. At 19–34 (VRTGKSIPQRSPRTRK) the chain is on the mitochondrial matrix side. A helical membrane pass occupies residues 35 to 51 (SLLVGGTIASAVVLYNF). The Mitochondrial intermembrane portion of the chain corresponds to 52-569 (NDTFHDSVKH…KFIPKTWLSS (518 aa)).

It belongs to the protein kinase superfamily. ADCK protein kinase family.

The protein resides in the mitochondrion. The protein localises to the mitochondrion inner membrane. Component of MIOREX complexes, large expressome-like assemblies of ribosomes with factors involved in all the steps of post-transcriptional gene expression. Involved in mitochondrial lipid homeostasis. This chain is ABC1 family protein MCP2, found in Saccharomyces cerevisiae (strain ATCC 204508 / S288c) (Baker's yeast).